Consider the following 160-residue polypeptide: Ribosomal RNA large subunit methyltransferase H (160 aa).

S-adenosyl-L-methionine contacts are provided by residues L76, G108, and 127 to 132; that span reads LGKMTW.

It belongs to the RNA methyltransferase RlmH family. As to quaternary structure, homodimer.

It is found in the cytoplasm. The enzyme catalyses pseudouridine(1915) in 23S rRNA + S-adenosyl-L-methionine = N(3)-methylpseudouridine(1915) in 23S rRNA + S-adenosyl-L-homocysteine + H(+). Its function is as follows. Specifically methylates the pseudouridine at position 1915 (m3Psi1915) in 23S rRNA. In Rhizobium rhizogenes (strain K84 / ATCC BAA-868) (Agrobacterium radiobacter), this protein is Ribosomal RNA large subunit methyltransferase H.